A 658-amino-acid polypeptide reads, in one-letter code: PTS system 2-O-alpha-mannosyl-D-glycerate-specific EIIABC component (658 aa).

The Periplasmic segment spans residues 1–313 (MVLFYRAHWR…TELKQALLSG (313 aa)). The PTS EIIA type-2 domain occupies 25 to 171 (TLTHRDALCL…DELLSALDDK (147 aa)). His-87 functions as the Tele-phosphohistidine intermediate; for EIIA activity in the catalytic mechanism. The residue at position 87 (His-87) is a Phosphohistidine; by HPr. The PTS EIIB type-2 domain maps to 186–282 (IVCVTACPAG…AEALIQQALT (97 aa)). Cys-192 acts as the Phosphocysteine intermediate; for EIIB activity in catalysis. Cys-192 carries the phosphocysteine; by EIIA modification. The PTS EIIC type-2 domain maps to 306–641 (LKQALLSGIS…AISTAILLMW (336 aa)). A helical membrane pass occupies residues 314–334 (ISFAVPLIVAGGTVLAVAVLL). The Cytoplasmic portion of the chain corresponds to 335-358 (SQIFGLQDLFNEENSWLWMYRKLG). The chain crosses the membrane as a helical span at residues 359-379 (GGLLGILMVPVLAAYTAYSLA). The Periplasmic portion of the chain corresponds to 380–389 (DKPALAPGFA). A helical membrane pass occupies residues 390-410 (AGLAANMIGSGFLGAVVGGLI). At 411–433 (AGYLMRWVKNHLRLSSKFNGFLT) the chain is on the cytoplasmic side. A helical transmembrane segment spans residues 434–454 (FYLYPVLGTLGAGSLMLFVVG). Topologically, residues 455-474 (EPVAWINNSLTAWLNGLSGS) are periplasmic. A helical membrane pass occupies residues 475 to 495 (NALLLGAILGFMCSFDLGGPV). The Cytoplasmic segment spans residues 496-500 (NKAAY). Residues 501-521 (AFCLGAMANGVYGPYAIFASV) form a helical membrane-spanning segment. Over 522-551 (KMVSAFTVTASTMLAPRLFKEFEIETGKST) the chain is Periplasmic. The chain crosses the membrane as a helical span at residues 552-572 (WLLGLAGITEGAIPMAIEDPL). Arg-573 is a topological domain (cytoplasmic). A helical membrane pass occupies residues 574 to 594 (VIGSFVLGSMVTGAIVGAMNI). Residues 595–620 (GLSTPGAGIFSLFLLHDNGAGGVMAA) are Periplasmic-facing. A helical transmembrane segment spans residues 621–641 (IGWFGAALVGAAISTAILLMW). Residues 642–658 (RRHAVKHGNYLTDGVMP) lie on the Cytoplasmic side of the membrane.

The protein resides in the cell inner membrane. The catalysed reaction is (2R)-2-O-(alpha-D-mannosyl)-glycerate(out) + N(pros)-phospho-L-histidyl-[protein] = (2R)-2-O-(6-phospho-alpha-D-mannosyl)-glycerate(in) + L-histidyl-[protein]. In terms of biological role, the phosphoenolpyruvate-dependent sugar phosphotransferase system (sugar PTS), a major carbohydrate active transport system, catalyzes the phosphorylation of incoming sugar substrates concomitantly with their translocation across the cell membrane. This system is involved in mannosyl-D-glycerate transport. Also involved in thermoinduction of ompC. The protein is PTS system 2-O-alpha-mannosyl-D-glycerate-specific EIIABC component of Escherichia coli (strain K12).